We begin with the raw amino-acid sequence, 160 residues long: Small ribosomal subunit protein uS7A (160 aa).

Belongs to the universal ribosomal protein uS7 family. Part of the 30S ribosomal subunit. Contacts proteins S9 and S11.

Its function is as follows. One of the primary rRNA binding proteins, it binds directly to 16S rRNA where it nucleates assembly of the head domain of the 30S subunit. Is located at the subunit interface close to the decoding center, probably blocks exit of the E-site tRNA. The polypeptide is Small ribosomal subunit protein uS7A (Aquifex aeolicus (strain VF5)).